A 123-amino-acid polypeptide reads, in one-letter code: Small ribosomal subunit protein uS12 (123 aa).

Aspartate 89 carries the 3-methylthioaspartic acid modification. Residues serine 104–lysine 123 are disordered. A compositionally biased stretch (basic residues) spans aspartate 109–lysine 123.

The protein belongs to the universal ribosomal protein uS12 family. As to quaternary structure, part of the 30S ribosomal subunit. Contacts proteins S8 and S17. May interact with IF1 in the 30S initiation complex.

Functionally, with S4 and S5 plays an important role in translational accuracy. Its function is as follows. Interacts with and stabilizes bases of the 16S rRNA that are involved in tRNA selection in the A site and with the mRNA backbone. Located at the interface of the 30S and 50S subunits, it traverses the body of the 30S subunit contacting proteins on the other side and probably holding the rRNA structure together. The combined cluster of proteins S8, S12 and S17 appears to hold together the shoulder and platform of the 30S subunit. The polypeptide is Small ribosomal subunit protein uS12 (Geotalea daltonii (strain DSM 22248 / JCM 15807 / FRC-32) (Geobacter daltonii)).